Here is a 325-residue protein sequence, read N- to C-terminus: DNA-directed RNA polymerase subunit alpha (325 aa).

The alpha N-terminal domain (alpha-NTD) stretch occupies residues 1 to 239 (MQQFLRYNIN…DHLKPLIDIN (239 aa)). The segment at 255–325 (EKNKKLSIPI…ELYDLKLKNN (71 aa)) is alpha C-terminal domain (alpha-CTD).

This sequence belongs to the RNA polymerase alpha chain family. Homodimer. The RNAP catalytic core consists of 2 alpha, 1 beta, 1 beta' and 1 omega subunit. When a sigma factor is associated with the core the holoenzyme is formed, which can initiate transcription.

The catalysed reaction is RNA(n) + a ribonucleoside 5'-triphosphate = RNA(n+1) + diphosphate. Its function is as follows. DNA-dependent RNA polymerase catalyzes the transcription of DNA into RNA using the four ribonucleoside triphosphates as substrates. The chain is DNA-directed RNA polymerase subunit alpha from Mycoplasmoides gallisepticum (strain R(low / passage 15 / clone 2)) (Mycoplasma gallisepticum).